The chain runs to 324 residues: D-alanine--D-alanine ligase (324 aa).

The region spanning lysine 112 to glutamate 312 is the ATP-grasp domain. ATP is bound at residue leucine 139–alanine 193. Mg(2+) is bound by residues aspartate 265, glutamate 279, and asparagine 281.

This sequence belongs to the D-alanine--D-alanine ligase family. The cofactor is Mg(2+). It depends on Mn(2+) as a cofactor.

The protein localises to the cytoplasm. The enzyme catalyses 2 D-alanine + ATP = D-alanyl-D-alanine + ADP + phosphate + H(+). It functions in the pathway cell wall biogenesis; peptidoglycan biosynthesis. Functionally, cell wall formation. The chain is D-alanine--D-alanine ligase from Caulobacter vibrioides (strain ATCC 19089 / CIP 103742 / CB 15) (Caulobacter crescentus).